Here is a 430-residue protein sequence, read N- to C-terminus: Gamma-glutamyl phosphate reductase (430 aa).

This sequence belongs to the gamma-glutamyl phosphate reductase family.

Its subcellular location is the cytoplasm. It catalyses the reaction L-glutamate 5-semialdehyde + phosphate + NADP(+) = L-glutamyl 5-phosphate + NADPH + H(+). It functions in the pathway amino-acid biosynthesis; L-proline biosynthesis; L-glutamate 5-semialdehyde from L-glutamate: step 2/2. Catalyzes the NADPH-dependent reduction of L-glutamate 5-phosphate into L-glutamate 5-semialdehyde and phosphate. The product spontaneously undergoes cyclization to form 1-pyrroline-5-carboxylate. The protein is Gamma-glutamyl phosphate reductase of Rhodopseudomonas palustris (strain BisB5).